We begin with the raw amino-acid sequence, 691 residues long: Elongation factor G (691 aa).

Residues 8 to 282 (ERVRNIGIAA…AVVDYLPAPI (275 aa)) enclose the tr-type G domain. GTP contacts are provided by residues 17–24 (AHIDAGKT), 81–85 (DTPGH), and 135–138 (NKMD).

Belongs to the TRAFAC class translation factor GTPase superfamily. Classic translation factor GTPase family. EF-G/EF-2 subfamily.

It is found in the cytoplasm. Functionally, catalyzes the GTP-dependent ribosomal translocation step during translation elongation. During this step, the ribosome changes from the pre-translocational (PRE) to the post-translocational (POST) state as the newly formed A-site-bound peptidyl-tRNA and P-site-bound deacylated tRNA move to the P and E sites, respectively. Catalyzes the coordinated movement of the two tRNA molecules, the mRNA and conformational changes in the ribosome. The protein is Elongation factor G of Thermosynechococcus vestitus (strain NIES-2133 / IAM M-273 / BP-1).